The sequence spans 231 residues: A-type ATP synthase subunit D (231 aa).

Belongs to the V-ATPase D subunit family. In terms of assembly, has multiple subunits with at least A(3), B(3), C, D, E, F, H, I and proteolipid K(x).

It localises to the cell membrane. Component of the A-type ATP synthase that produces ATP from ADP in the presence of a proton gradient across the membrane. This Methanobrevibacter smithii (strain ATCC 35061 / DSM 861 / OCM 144 / PS) protein is A-type ATP synthase subunit D.